A 268-amino-acid chain; its full sequence is 14-3-3-like protein GF14 upsilon (268 aa).

Phosphoserine occurs at positions 69 and 192. Threonine 213 bears the Phosphothreonine mark. Residues 243–268 (EAGDDIKEAPKEVQKVDEQAQPPPSQ) form a disordered region. Residues 246 to 260 (DDIKEAPKEVQKVDE) are compositionally biased toward basic and acidic residues. The residue at position 267 (serine 267) is a Phosphoserine.

It belongs to the 14-3-3 family. As to quaternary structure, interacts with EDE1. Interacts with DREB1A and DREB1B in the nucleus. Interacts with CINV1.

It localises to the cytoplasm. It is found in the nucleus. Is associated with a DNA binding complex that binds to the G box, a well-characterized cis-acting DNA regulatory element found in plant genes. May be involved in cell cycle regulation by binding to soluble EDE1 and sequestering it in an inactive form during the early stages of mitosis. The chain is 14-3-3-like protein GF14 upsilon (GRF5) from Arabidopsis thaliana (Mouse-ear cress).